A 1448-amino-acid chain; its full sequence is Protein clueless (1448 aa).

Disordered stretches follow at residues 1–96 (MALE…HAEK), 110–129 (NANV…ADGD), and 265–286 (RTRP…VSDP). Low complexity-rich tracts occupy residues 9–26 (NSNA…TKAS) and 41–66 (NLNP…ADGP). The span at 68–77 (AKKKGKKNRN) shows a compositional bias: basic residues. Residues 78–88 (KSPTEPTTEAV) are compositionally biased toward polar residues. Phosphoserine is present on S270. The Clu domain maps to 424-666 (RAEDAFSSKL…RTFPPDVNFL (243 aa)). Disordered regions lie at residues 726 to 773 (SEKS…SGEA), 958 to 1010 (AVSS…SASD), and 1414 to 1448 (GEAE…ATSS). Over residues 748-769 (GAEKPDDKEKKNEEEEKKERST) the composition is skewed to basic and acidic residues. Over residues 966-981 (KKRGNGGKHNKHKSSK) the composition is skewed to basic residues. Over residues 986-1007 (QQQQQTTGNQNGSSSGSSNSSS) the composition is skewed to low complexity. Over residues 1419–1429 (AVSKDIKEQPE) the composition is skewed to basic and acidic residues.

The protein belongs to the CLU family.

Its subcellular location is the cytoplasm. MRNA-binding protein involved in proper cytoplasmic distribution of mitochondria. This Drosophila melanogaster (Fruit fly) protein is Protein clueless.